The sequence spans 399 residues: L-2-hydroxyglutarate dehydrogenase (399 aa).

The protein belongs to the L2HGDH family. Requires FAD as cofactor.

It catalyses the reaction (S)-2-hydroxyglutarate + A = 2-oxoglutarate + AH2. Catalyzes the dehydrogenation of L-2-hydroxyglutarate (L2HG or(S)-2-hydroxyglutarate) to 2-oxoglutarate (alpha-ketoglutarate). Active in vitro with the artificial electron acceptor 2,6-dichlorophenolindophenol (DCPIP). Also displays a very low oxidase activity in vitro on L-2-hydroxyglutarate with O2 as the electron acceptor, but this activity is most likely not physiological. In Indibacter alkaliphilus (strain CCUG 57479 / KCTC 22604 / LW1), this protein is L-2-hydroxyglutarate dehydrogenase.